The primary structure comprises 378 residues: Decaprenyl-diphosphate synthase subunit 1 (378 aa).

Isopentenyl diphosphate contacts are provided by lysine 72, arginine 75, and histidine 130. Positions 137 and 141 each coordinate Mg(2+). Arginine 147 is an isopentenyl diphosphate binding site.

The protein belongs to the FPP/GGPP synthase family. Heterotetramer of 2 dps1 and 2 dlp1 subunits. The cofactor is Mg(2+).

Its subcellular location is the mitochondrion. It carries out the reaction 7 isopentenyl diphosphate + (2E,6E)-farnesyl diphosphate = all-trans-decaprenyl diphosphate + 7 diphosphate. Its pathway is cofactor biosynthesis; ubiquinone biosynthesis. In terms of biological role, supplies decaprenyl diphosphate, the precursor for the side chain of the isoprenoid quinones ubiquinone-10. This chain is Decaprenyl-diphosphate synthase subunit 1 (dps1), found in Schizosaccharomyces pombe (strain 972 / ATCC 24843) (Fission yeast).